A 206-amino-acid polypeptide reads, in one-letter code: MGSGPRGALSLLLLLLAPPSRPAAGCPAPCSCAGTLVDCGRRGLTWASLPTAFPVDTTELVLTGNNLTALPPGLLDALPALRTAHLGANPWRCDCRLVPLRAWLAGRPERAPYRDLRCVAPPALRGRLLPYLAEDELRAACAPGPLCWGALAAQLALLGLGLLHALLLVLLLCRLRRLRARARARAAARLSLTDPLVAERAGTDES.

The signal sequence occupies residues 1–25; the sequence is MGSGPRGALSLLLLLLAPPSRPAAG. 2 disulfide bridges follow: C26-C32 and C30-C39. The LRRNT domain maps to 27–55; that stretch reads PAPCSCAGTLVDCGRRGLTWASLPTAFPV. At 27–147 the chain is on the extracellular side; it reads PAPCSCAGTL…RAACAPGPLC (121 aa). Residues 60 to 83 form an LRR repeat; sequence LVLTGNNLTALPPGLLDALPALRT. An N-linked (GlcNAc...) asparagine glycan is attached at N66. Residues 89–143 enclose the LRRCT domain; that stretch reads NPWRCDCRLVPLRAWLAGRPERAPYRDLRCVAPPALRGRLLPYLAEDELRAACAP. 2 disulfides stabilise this stretch: C93–C118 and C95–C141. The helical transmembrane segment at 148–172 threads the bilayer; sequence WGALAAQLALLGLGLLHALLLVLLL. Topologically, residues 173 to 206 are cytoplasmic; it reads CRLRRLRARARARAAARLSLTDPLVAERAGTDES. S191 carries the post-translational modification Phosphoserine; by PKA. T193 carries the phosphothreonine modification.

Two GP-Ib beta are disulfide-linked to one GP-Ib alpha. GP-IX is complexed with the GP-Ib heterodimer via a non covalent linkage. Interacts with TRAF4. In terms of tissue distribution, expressed in heart and brain.

The protein localises to the membrane. Its function is as follows. Gp-Ib, a surface membrane protein of platelets, participates in the formation of platelet plugs by binding to von Willebrand factor, which is already bound to the subendothelium. This is Platelet glycoprotein Ib beta chain (GP1BB) from Homo sapiens (Human).